We begin with the raw amino-acid sequence, 138 residues long: Unique cartilage matrix-associated protein (138 aa).

The signal sequence occupies residues Met1–Ala27. The propeptide at Ser28 to Arg64 is ucma-N. The tract at residues Leu58–Gln78 is disordered. Basic and acidic residues predominate over residues Lys67–Gln78. Positions Gln78–Trp122 form a coiled coil.

This sequence belongs to the UCMA family. Proteolytically cleaved by a furin-like convertase to generate a persistent C-terminal fragment found in almost the entire cartilage matrix, and affecting osteoblast differentiation. Post-translationally, sulfated on one or two tyrosine residues within the tryptic peptide 121-135. In terms of tissue distribution, predominantly expressed in resting chondrocytes.

It is found in the secreted. The protein resides in the extracellular space. It localises to the extracellular matrix. The protein localises to the golgi apparatus. Its subcellular location is the cytoplasm. It is found in the cytoskeleton. Functionally, may be involved in the negative control of osteogenic differentiation of osteochondrogenic precursor cells in peripheral zones of fetal cartilage and at the cartilage-bone interface. The protein is Unique cartilage matrix-associated protein (Ucma) of Mus musculus (Mouse).